The following is a 322-amino-acid chain: Deoxycytidylate deaminase (322 aa).

Residues 173–311 (SWDSYFMEMA…SLLQAAGVQL (139 aa)) form the CMP/dCMP-type deaminase domain. His-246 lines the Zn(2+) pocket. Glu-248 serves as the catalytic Proton donor. Cys-273 and Cys-276 together coordinate Zn(2+).

The protein belongs to the cytidine and deoxycytidylate deaminase family. Zn(2+) is required as a cofactor.

It localises to the cytoplasm. The protein localises to the nucleus. It carries out the reaction dCMP + H2O + H(+) = dUMP + NH4(+). Functionally, supplies the nucleotide substrate for thymidylate synthetase. This is Deoxycytidylate deaminase from Schizosaccharomyces pombe (strain 972 / ATCC 24843) (Fission yeast).